Reading from the N-terminus, the 542-residue chain is Nibrin homolog (542 aa).

One can recognise an FHA domain in the interval 25–90; sequence YKVGRKGCDI…YGTFVKTDLG (66 aa). The region spanning 119–195 is the BRCT domain; that stretch reads IYRLSLIPLV…KTIILTNWVM (77 aa). Residues 409–430 are disordered; sequence SRGHMDEKNSSDSVTIRRDRND. The tract at residues 465–500 is involved in MRE11-binding; it reads VDFKRFRKGNVTCGNSFSSLIPFAKDPYKEYDSWDV.

It belongs to the Nibrin family. In terms of assembly, component of the MRN complex composed of two heterodimers RAD50 and MRE11 associated with a single NBS1.

Its subcellular location is the nucleus. It is found in the chromosome. Component of the MRN complex, which plays a central role in double-strand break (DSB) repair, DNA recombination, maintenance of telomere integrity and meiosis. The MRN complex is involved in the repair of DNA double-strand breaks (DSBs) via homologous recombination (HR), an error-free mechanism which primarily occurs during S and G2 phases. The complex (1) mediates the end resection of damaged DNA, which generates proper single-stranded DNA, a key initial steps in HR, and is (2) required for the recruitment of other repair factors and efficient activation of ATM and ATR upon DNA damage. The MRN complex possesses single-strand endonuclease activity and double-strand-specific 3'-5' exonuclease activity, which are provided by MRE11, to initiate end resection, which is required for single-strand invasion and recombination. Within the MRN complex, NBS1 acts as a protein-protein adapter, which specifically recognizes and binds phosphorylated proteins, promoting their recruitment to DNA damage sites. Recruits MRE11 and RAD50 components of the MRN complex to DSBs in response to DNA damage. The protein is Nibrin homolog of Arabidopsis thaliana (Mouse-ear cress).